We begin with the raw amino-acid sequence, 413 residues long: Alpha-1-antitrypsin-like protein GS55-LT (413 aa).

The first 21 residues, 1-21 (MPSSISWGLLLLAGLSCLATG), serve as a signal peptide directing secretion. Asn-65, Asn-102, and Asn-123 each carry an N-linked (GlcNAc...) asparagine glycan. Residues 368 to 387 (RHTVKGPMALTLAPEVKFNR) are RCL.

The protein belongs to the serpin family.

The protein resides in the secreted. Its function is as follows. Inhibitor of serine proteases. The polypeptide is Alpha-1-antitrypsin-like protein GS55-LT (Ictidomys tridecemlineatus (Thirteen-lined ground squirrel)).